The following is a 435-amino-acid chain: E3 ubiquitin-protein ligase PUB22 (435 aa).

The U-box domain occupies 6–81 (EIPSFFLCPI…QSWCTLNASY (76 aa)).

Interacts with RPN12A. Binds to EXO70B2. In terms of processing, auto-ubiquitinated leading to degradation via the 26S proteasome. This Auto-ubiquitination is repressed by the bacterial elicitor flg22 thus leading to a transiently increased protein stabilization and accumulation.

The protein localises to the cytoplasm. It carries out the reaction S-ubiquitinyl-[E2 ubiquitin-conjugating enzyme]-L-cysteine + [acceptor protein]-L-lysine = [E2 ubiquitin-conjugating enzyme]-L-cysteine + N(6)-ubiquitinyl-[acceptor protein]-L-lysine.. Its pathway is protein modification; protein ubiquitination. Functionally, E3 ubiquitin-protein ligase that negatively regulates water stress response. May control in coordination with PUB23 a drought signaling pathway by ubiquitinating cytosolic RPN12a. Acts as a negative regulator of the immunity triggered by the pathogen-associated molecular patterns (PAMPs), in association with PUB23 and PUB24. Regulates EXO70B2 ubiquitination and degradation via the 26S proteasome to attenuate PAMP-induced signaling. The polypeptide is E3 ubiquitin-protein ligase PUB22 (Arabidopsis thaliana (Mouse-ear cress)).